A 95-amino-acid chain; its full sequence is Small ribosomal subunit protein bS6 (95 aa).

Belongs to the bacterial ribosomal protein bS6 family.

In terms of biological role, binds together with bS18 to 16S ribosomal RNA. This Corynebacterium efficiens (strain DSM 44549 / YS-314 / AJ 12310 / JCM 11189 / NBRC 100395) protein is Small ribosomal subunit protein bS6.